The primary structure comprises 247 residues: MAQQGSGYQARYKRILLKLSGEALMGSEEFGIDPKVLDRMALEVGQLVGIGVQVGLVIGGGNLFRGAALSAAGMDRVTGDHMGMLATVMNALAMRDALERANISAIVMSAISMVGVTDHYDRRKAMRHLNSKEVVIFAAGTGNPFFTTDSAACLRAIEIDADVVLKATKVDGVYTADPFKDPHAEKFDHLTYDEVLDRKLGVMDLTAICLCRDHKMPLRVFNMNKPGALLNIVHGGAEGTLIEEGEQ.

Position 18–21 (18–21 (KLSG)) interacts with ATP. Glycine 60 contributes to the UMP binding site. Residues glycine 61 and arginine 65 each coordinate ATP. Residues aspartate 80 and 141–148 (TGNPFFTT) each bind UMP. ATP is bound by residues threonine 168, tyrosine 174, and aspartate 177.

The protein belongs to the UMP kinase family. Homohexamer.

It is found in the cytoplasm. The enzyme catalyses UMP + ATP = UDP + ADP. It functions in the pathway pyrimidine metabolism; CTP biosynthesis via de novo pathway; UDP from UMP (UMPK route): step 1/1. With respect to regulation, inhibited by UTP. Its function is as follows. Catalyzes the reversible phosphorylation of UMP to UDP. The polypeptide is Uridylate kinase (Pseudomonas fluorescens (strain ATCC BAA-477 / NRRL B-23932 / Pf-5)).